A 101-amino-acid chain; its full sequence is Putative pterin-4-alpha-carbinolamine dehydratase (101 aa).

It belongs to the pterin-4-alpha-carbinolamine dehydratase family.

It catalyses the reaction (4aS,6R)-4a-hydroxy-L-erythro-5,6,7,8-tetrahydrobiopterin = (6R)-L-erythro-6,7-dihydrobiopterin + H2O. The polypeptide is Putative pterin-4-alpha-carbinolamine dehydratase (Rhizobium etli (strain ATCC 51251 / DSM 11541 / JCM 21823 / NBRC 15573 / CFN 42)).